The chain runs to 365 residues: GDSL lipase (365 aa).

A signal peptide spans 1–27 (MAVASRKLGALVLVAVLCLSLPTGCLS). The active-site Nucleophile is the Ser40. N-linked (GlcNAc...) asparagine glycans are attached at residues Asn189 and Asn310. Catalysis depends on charge relay system residues Asp318 and His321.

This sequence belongs to the 'GDSL' lipolytic enzyme family. Restricted to the pericarp during achene maturation. Expressed in the leaves of mature plants and seedlings, as well as in buds and flowers. Present in disk florets.

The protein resides in the secreted. It is found in the extracellular space. It carries out the reaction (Z,S)-pyrethrolone + (1R,3R)-chrysanthemoyl-CoA = pyrethrin I + CoA. It catalyses the reaction (Z,S)-pyrethrolone + (1R,3R)-pyrethroyl-CoA = pyrethrin II + CoA. The catalysed reaction is (Z,S)-jasmololone + (1R,3R)-chrysanthemoyl-CoA = jasmolin I + CoA. The enzyme catalyses (Z,S)-cinerolone + (1R,3R)-chrysanthemoyl-CoA = cinerin I + CoA. It carries out the reaction (Z,S)-jasmololone + (1R,3R)-pyrethroyl-CoA = jasmolin II + CoA. It catalyses the reaction (Z,S)-cinerolone + (1R,3R)-pyrethroyl-CoA = cinerin II + CoA. It functions in the pathway isoprenoid biosynthesis. Component of the monoterpenoid pyrethrins biosynthesis; pyrethrins are widely used plant-derived pesticide. Acyltransferase that catalyzes the esterification of terpene acids and lipid alcohol substrates into pyrethrins; mediates the transfer of a chrysanthemoyl moiety from the coenzyme A (CoA) thio-ester chrysanthemoyl CoA to pyrethrolone, and, to a lower extent, to jasmololone and cinerolone thus producing pyrethrins (e.g. pyrethrin type I). Can also use pyrethroyl CoA as substrate. Also has esterase activity, being able to cleave the ester bond of pyrethrin I, p-nitrophenyl butanoate and p-nitrophenyl octanoate to produce pyrethrolone and p-nitrophenol, respectively. The protein is GDSL lipase of Tanacetum cinerariifolium (Dalmatian daisy).